The sequence spans 238 residues: Large ribosomal subunit protein uL2 (238 aa).

The segment at 198-238 is disordered; sequence NHPHGGGSHQSPSFPTTVSRNAPPGRKVGHIAARSTGRRKR. Positions 206-217 are enriched in polar residues; it reads HQSPSFPTTVSR.

The protein belongs to the universal ribosomal protein uL2 family. In terms of assembly, part of the 50S ribosomal subunit. Forms a bridge to the 30S subunit in the 70S ribosome.

In terms of biological role, one of the primary rRNA binding proteins. Required for association of the 30S and 50S subunits to form the 70S ribosome, for tRNA binding and peptide bond formation. It has been suggested to have peptidyltransferase activity; this is somewhat controversial. Makes several contacts with the 16S rRNA in the 70S ribosome. This is Large ribosomal subunit protein uL2 from Hyperthermus butylicus (strain DSM 5456 / JCM 9403 / PLM1-5).